The following is a 163-amino-acid chain: Endoribonuclease YbeY (163 aa).

Zn(2+) contacts are provided by His-121, His-125, and His-131.

This sequence belongs to the endoribonuclease YbeY family. Zn(2+) serves as cofactor.

It is found in the cytoplasm. Single strand-specific metallo-endoribonuclease involved in late-stage 70S ribosome quality control and in maturation of the 3' terminus of the 16S rRNA. The protein is Endoribonuclease YbeY of Synechococcus sp. (strain JA-3-3Ab) (Cyanobacteria bacterium Yellowstone A-Prime).